Reading from the N-terminus, the 224-residue chain is uncharacterized protein (224 aa).

The region spanning 10–77 (TPYYLQFYNQ…DRNGFSITSL (68 aa)) is the HTH gntR-type domain. A DNA-binding region (H-T-H motif) is located at residues 37-56 (ETQLAKSFGVSRSPIREAMR).

This is an uncharacterized protein from Bacillus subtilis (strain 168).